A 192-amino-acid chain; its full sequence is Cytidylate kinase (192 aa).

12–20 (GLAGSGTTT) contributes to the ATP binding site.

It belongs to the cytidylate kinase family. Type 2 subfamily.

Its subcellular location is the cytoplasm. It carries out the reaction CMP + ATP = CDP + ADP. It catalyses the reaction dCMP + ATP = dCDP + ADP. The protein is Cytidylate kinase (cmk) of Pyrococcus horikoshii (strain ATCC 700860 / DSM 12428 / JCM 9974 / NBRC 100139 / OT-3).